The primary structure comprises 479 residues: Sulfate adenylyltransferase subunit 1 (479 aa).

The tr-type G domain maps to 25–239; that stretch reads KSLLRFLTCG…EVLETVDIQR (215 aa). Residues 34–41 form a G1 region; it reads GSVDDGKS. 34–41 lines the GTP pocket; that stretch reads GSVDDGKS. Positions 92–96 are G2; sequence GITID. The G3 stretch occupies residues 113 to 116; sequence DTPG. GTP is bound by residues 113–117 and 168–171; these read DTPGH and NKMD. The interval 168–171 is G4; sequence NKMD. The tract at residues 206–208 is G5; the sequence is SAL.

This sequence belongs to the TRAFAC class translation factor GTPase superfamily. Classic translation factor GTPase family. CysN/NodQ subfamily. In terms of assembly, heterodimer composed of CysD, the smaller subunit, and CysN.

The enzyme catalyses sulfate + ATP + H(+) = adenosine 5'-phosphosulfate + diphosphate. It functions in the pathway sulfur metabolism; hydrogen sulfide biosynthesis; sulfite from sulfate: step 1/3. In terms of biological role, with CysD forms the ATP sulfurylase (ATPS) that catalyzes the adenylation of sulfate producing adenosine 5'-phosphosulfate (APS) and diphosphate, the first enzymatic step in sulfur assimilation pathway. APS synthesis involves the formation of a high-energy phosphoric-sulfuric acid anhydride bond driven by GTP hydrolysis by CysN coupled to ATP hydrolysis by CysD. In Salmonella arizonae (strain ATCC BAA-731 / CDC346-86 / RSK2980), this protein is Sulfate adenylyltransferase subunit 1.